The chain runs to 516 residues: uncharacterized protein (516 aa).

2 PFTB repeats span residues 45–86 (RQDA…QRAD) and 401–443 (DERA…DGSE).

This is an uncharacterized protein from Sinorhizobium fredii (strain NBRC 101917 / NGR234).